We begin with the raw amino-acid sequence, 335 residues long: GTPase Obg (335 aa).

The region spanning 4–162 (GNFVDYTKIY…ADIVLELKVL (159 aa)) is the Obg domain. The 170-residue stretch at 163–332 (ADVGLVGFPN…LKDKLWAMLN (170 aa)) folds into the OBG-type G domain. GTP-binding positions include 169 to 176 (GFPNAGKS), 194 to 198 (FTTLK), 216 to 219 (DIPG), 283 to 286 (SKCD), and 313 to 315 (SSI). Mg(2+)-binding residues include Ser176 and Thr196.

The protein belongs to the TRAFAC class OBG-HflX-like GTPase superfamily. OBG GTPase family. As to quaternary structure, monomer. Mg(2+) serves as cofactor.

It is found in the cytoplasm. In terms of biological role, an essential GTPase which binds GTP, GDP and possibly (p)ppGpp with moderate affinity, with high nucleotide exchange rates and a fairly low GTP hydrolysis rate. Plays a role in control of the cell cycle, stress response, ribosome biogenesis and in those bacteria that undergo differentiation, in morphogenesis control. In Flavobacterium psychrophilum (strain ATCC 49511 / DSM 21280 / CIP 103535 / JIP02/86), this protein is GTPase Obg.